Consider the following 277-residue polypeptide: tRNA uridine(34) hydroxylase (277 aa).

The Rhodanese domain occupies 126–221 (SSPDVHVIDT…YLETMRGDDS (96 aa)). C181 acts as the Cysteine persulfide intermediate in catalysis.

Belongs to the TrhO family.

It carries out the reaction uridine(34) in tRNA + AH2 + O2 = 5-hydroxyuridine(34) in tRNA + A + H2O. Functionally, catalyzes oxygen-dependent 5-hydroxyuridine (ho5U) modification at position 34 in tRNAs. The chain is tRNA uridine(34) hydroxylase from Anaplasma marginale (strain St. Maries).